The following is a 290-amino-acid chain: MPELPEVETVRRGLEMKIAGRVLVRVAQYRPDLRFPLPERFAARLTGLRVAGLFRRAKYLLIRLEGSAEGPLVWLVHLGMSGTLVVRRGPPGPPGPHDHLVFETDPPPGEAQGWVVTYNDVRRFGFMDLFPEALLDSHPMLACLGPEPLGNGFDAEELSRRLAGKITPIKAALLDQTVVAGLGNIYVCESLFRAGISPRRLAHTVAGRRAGRLVPAIRDVLTEAIAAGGSSLRDYVQSDGELGYFQHSFKVYGREGEPCPGCDCDPVRTGGIARIVQSGRSTFYCPRHQR.

The Schiff-base intermediate with DNA role is filled by Pro2. The Proton donor role is filled by Glu3. The Proton donor; for beta-elimination activity role is filled by Lys58. Residues His97, Arg122, and Lys165 each coordinate DNA. Residues Lys250–Arg290 form an FPG-type; atypical zinc finger. Residue Arg280 is the Proton donor; for delta-elimination activity of the active site.

This sequence belongs to the FPG family. In terms of assembly, monomer. Zn(2+) serves as cofactor.

The catalysed reaction is Hydrolysis of DNA containing ring-opened 7-methylguanine residues, releasing 2,6-diamino-4-hydroxy-5-(N-methyl)formamidopyrimidine.. It catalyses the reaction 2'-deoxyribonucleotide-(2'-deoxyribose 5'-phosphate)-2'-deoxyribonucleotide-DNA = a 3'-end 2'-deoxyribonucleotide-(2,3-dehydro-2,3-deoxyribose 5'-phosphate)-DNA + a 5'-end 5'-phospho-2'-deoxyribonucleoside-DNA + H(+). Involved in base excision repair of DNA damaged by oxidation or by mutagenic agents. Acts as a DNA glycosylase that recognizes and removes damaged bases. Has a preference for oxidized purines, such as 7,8-dihydro-8-oxoguanine (8-oxoG). Has AP (apurinic/apyrimidinic) lyase activity and introduces nicks in the DNA strand. Cleaves the DNA backbone by beta-delta elimination to generate a single-strand break at the site of the removed base with both 3'- and 5'-phosphates. This chain is Formamidopyrimidine-DNA glycosylase, found in Rhodospirillum centenum (strain ATCC 51521 / SW).